A 304-amino-acid polypeptide reads, in one-letter code: tRNA dimethylallyltransferase (304 aa).

Position 10 to 17 (glycine 10 to threonine 17) interacts with ATP. Threonine 12–threonine 17 lines the substrate pocket. Interaction with substrate tRNA regions lie at residues aspartate 35–leucine 38, glutamine 159–arginine 163, and arginine 240–arginine 245.

Belongs to the IPP transferase family. As to quaternary structure, monomer. The cofactor is Mg(2+).

The catalysed reaction is adenosine(37) in tRNA + dimethylallyl diphosphate = N(6)-dimethylallyladenosine(37) in tRNA + diphosphate. Functionally, catalyzes the transfer of a dimethylallyl group onto the adenine at position 37 in tRNAs that read codons beginning with uridine, leading to the formation of N6-(dimethylallyl)adenosine (i(6)A). This is tRNA dimethylallyltransferase from Shewanella sp. (strain W3-18-1).